A 756-amino-acid chain; its full sequence is Serine/threonine-protein kinase DCLK1 (756 aa).

Phosphoserine occurs at positions 32 and 36. Thr46 is subject to Phosphothreonine. 2 Doublecortin domains span residues 57–143 (KKVR…LEYT) and 186–269 (KLVT…QDDF). The tract at residues 288–393 (ASASRRGTTK…QRGWRREESE (106 aa)) is disordered. Low complexity predominate over residues 297 to 313 (KSPGPSRRSKSPASTSS). Phosphoserine is present on residues Ser305, Ser307, Ser330, Ser332, Ser334, Ser337, Ser347, Ser352, Ser353, Ser355, Ser358, Cys362, and Ser364. A compositionally biased stretch (low complexity) spans 347-364 (SQHGGSSTSLSSTKVCSS). Acidic residues predominate over residues 366–375 (DENDGPGEGD). Phosphoserine is present on Ser392. Residues 406 to 663 (YKVGRTIGDG…AVQVLEHPWV (258 aa)) enclose the Protein kinase domain. Residues 412–420 (IGDGNFAVV) and Lys435 contribute to the ATP site. The Proton acceptor role is filled by Asp527. A Phosphotyrosine modification is found at Tyr536. A compositionally biased stretch (basic and acidic residues) spans 711–723 (QVFRRRRNQDVRS). Residues 711-756 (QVFRRRRNQDVRSRYKAQPAPPELNSESEDYSPSSSETVRSPNSPF) are disordered. Phosphoserine is present on residues Ser742, Ser751, and Ser754.

It belongs to the protein kinase superfamily. CAMK Ser/Thr protein kinase family. CaMK subfamily.

The catalysed reaction is L-seryl-[protein] + ATP = O-phospho-L-seryl-[protein] + ADP + H(+). It catalyses the reaction L-threonyl-[protein] + ATP = O-phospho-L-threonyl-[protein] + ADP + H(+). Probable kinase that may be involved in a calcium-signaling pathway controlling neuronal migration in the developing brain. May also participate in functions of the mature nervous system. The protein is Serine/threonine-protein kinase DCLK1 (Dclk1) of Mus musculus (Mouse).